The chain runs to 571 residues: Glutamate--tRNA ligase (571 aa).

The short motif at 110–120 is the 'HIGH' region element; that stretch reads PNPNGPGTLGS.

It belongs to the class-I aminoacyl-tRNA synthetase family. Glutamate--tRNA ligase type 2 subfamily.

The protein resides in the cytoplasm. It catalyses the reaction tRNA(Glu) + L-glutamate + ATP = L-glutamyl-tRNA(Glu) + AMP + diphosphate. Catalyzes the attachment of glutamate to tRNA(Glu) in a two-step reaction: glutamate is first activated by ATP to form Glu-AMP and then transferred to the acceptor end of tRNA(Glu). This Methanosarcina acetivorans (strain ATCC 35395 / DSM 2834 / JCM 12185 / C2A) protein is Glutamate--tRNA ligase.